The following is a 367-amino-acid chain: UDP-N-acetylglucosamine--N-acetylmuramyl-(pentapeptide) pyrophosphoryl-undecaprenol N-acetylglucosamine transferase (367 aa).

UDP-N-acetyl-alpha-D-glucosamine contacts are provided by residues 18 to 20 (TGG), N130, R170, S196, I252, 271 to 276 (ALTVSE), and Q297.

It belongs to the glycosyltransferase 28 family. MurG subfamily.

It is found in the cell inner membrane. It carries out the reaction di-trans,octa-cis-undecaprenyl diphospho-N-acetyl-alpha-D-muramoyl-L-alanyl-D-glutamyl-meso-2,6-diaminopimeloyl-D-alanyl-D-alanine + UDP-N-acetyl-alpha-D-glucosamine = di-trans,octa-cis-undecaprenyl diphospho-[N-acetyl-alpha-D-glucosaminyl-(1-&gt;4)]-N-acetyl-alpha-D-muramoyl-L-alanyl-D-glutamyl-meso-2,6-diaminopimeloyl-D-alanyl-D-alanine + UDP + H(+). Its pathway is cell wall biogenesis; peptidoglycan biosynthesis. Its function is as follows. Cell wall formation. Catalyzes the transfer of a GlcNAc subunit on undecaprenyl-pyrophosphoryl-MurNAc-pentapeptide (lipid intermediate I) to form undecaprenyl-pyrophosphoryl-MurNAc-(pentapeptide)GlcNAc (lipid intermediate II). This chain is UDP-N-acetylglucosamine--N-acetylmuramyl-(pentapeptide) pyrophosphoryl-undecaprenol N-acetylglucosamine transferase, found in Shewanella frigidimarina (strain NCIMB 400).